A 189-amino-acid chain; its full sequence is ATP-dependent protease subunit HslV (189 aa).

The active site involves Thr12. Na(+) is bound by residues Ala172, Cys175, and Thr178.

It belongs to the peptidase T1B family. HslV subfamily. In terms of assembly, a double ring-shaped homohexamer of HslV is capped on each side by a ring-shaped HslU homohexamer. The assembly of the HslU/HslV complex is dependent on binding of ATP.

Its subcellular location is the cytoplasm. It catalyses the reaction ATP-dependent cleavage of peptide bonds with broad specificity.. Its activity is regulated as follows. Allosterically activated by HslU binding. Protease subunit of a proteasome-like degradation complex believed to be a general protein degrading machinery. This Anaplasma phagocytophilum (strain HZ) protein is ATP-dependent protease subunit HslV.